A 540-amino-acid chain; its full sequence is Keratin, type II cytoskeletal 73 (540 aa).

Residues 1-131 (MSRQFTYKSG…DPEIQKVCAQ (131 aa)) form a head region. The segment at 132–167 (EREQIKALNNKFASFIDKVRFLEQQNQVLGTKWELL) is coil 1A. Positions 132–445 (EREQIKALNN…KLLEGEECRM (314 aa)) constitute an IF rod domain. A linker 1 region spans residues 168 to 186 (QQQDLDNCKNNLEPILEGY). A coil 1B region spans residues 187–278 (ISNLRKQLEM…CLYEGEIAQM (92 aa)). Positions 279–302 (QSHISDTSVILSMDNNRNLDLNSI) are linker 12. A coil 2 region spans residues 303–441 (IAEVRAQYED…ATYRKLLEGE (139 aa)). The interval 442–540 (ECRMSGEYTN…LSSPTKKTPR (99 aa)) is tail. The interval 509-540 (GEAKTRLGSTSEIKDLLGKTPALSSPTKKTPR) is disordered. Polar residues predominate over residues 530–540 (ALSSPTKKTPR).

It belongs to the intermediate filament family. In terms of assembly, heterotetramer of two type I and two type II keratins.

In terms of biological role, has a role in hair formation. Specific component of keratin intermediate filaments in the inner root sheath (IRS) of the hair follicle. This is Keratin, type II cytoskeletal 73 (KRT73) from Bos taurus (Bovine).